The primary structure comprises 231 residues: NADH-ubiquinone oxidoreductase chain 4 (231 aa).

Transmembrane regions (helical) follow at residues Pro-1–Ile-21, Met-34–Leu-54, Ile-63–Gly-85, Ala-89–Tyr-111, Ile-128–Pro-148, and Thr-169–Leu-189.

The protein belongs to the complex I subunit 4 family.

It is found in the mitochondrion membrane. It catalyses the reaction a ubiquinone + NADH + 5 H(+)(in) = a ubiquinol + NAD(+) + 4 H(+)(out). Core subunit of the mitochondrial membrane respiratory chain NADH dehydrogenase (Complex I) that is believed to belong to the minimal assembly required for catalysis. Complex I functions in the transfer of electrons from NADH to the respiratory chain. The immediate electron acceptor for the enzyme is believed to be ubiquinone. In Deinagkistrodon acutus (Hundred-pace snake), this protein is NADH-ubiquinone oxidoreductase chain 4 (MT-ND4).